Consider the following 491-residue polypeptide: Protein nucleotidyltransferase YdiU (491 aa).

The ATP site is built by glycine 88, glycine 90, arginine 91, lysine 111, aspartate 123, glycine 124, arginine 174, and arginine 181. The active-site Proton acceptor is aspartate 250. Positions 251 and 260 each coordinate Mg(2+). ATP is bound at residue aspartate 260.

This sequence belongs to the SELO family. It depends on Mg(2+) as a cofactor. Mn(2+) is required as a cofactor.

It catalyses the reaction L-seryl-[protein] + ATP = 3-O-(5'-adenylyl)-L-seryl-[protein] + diphosphate. It carries out the reaction L-threonyl-[protein] + ATP = 3-O-(5'-adenylyl)-L-threonyl-[protein] + diphosphate. The catalysed reaction is L-tyrosyl-[protein] + ATP = O-(5'-adenylyl)-L-tyrosyl-[protein] + diphosphate. The enzyme catalyses L-histidyl-[protein] + UTP = N(tele)-(5'-uridylyl)-L-histidyl-[protein] + diphosphate. It catalyses the reaction L-seryl-[protein] + UTP = O-(5'-uridylyl)-L-seryl-[protein] + diphosphate. It carries out the reaction L-tyrosyl-[protein] + UTP = O-(5'-uridylyl)-L-tyrosyl-[protein] + diphosphate. Nucleotidyltransferase involved in the post-translational modification of proteins. It can catalyze the addition of adenosine monophosphate (AMP) or uridine monophosphate (UMP) to a protein, resulting in modifications known as AMPylation and UMPylation. The protein is Protein nucleotidyltransferase YdiU of Bradyrhizobium diazoefficiens (strain JCM 10833 / BCRC 13528 / IAM 13628 / NBRC 14792 / USDA 110).